A 452-amino-acid polypeptide reads, in one-letter code: Tubulin alpha-8 chain (452 aa).

GTP-binding residues include Q15, E74, S143, G147, T148, T182, N209, and N231. E74 is a binding site for Mg(2+). E257 is a catalytic residue.

It belongs to the tubulin family. Dimer of alpha and beta chains. A typical microtubule is a hollow water-filled tube with an outer diameter of 25 nm and an inner diameter of 15 nM. Alpha-beta heterodimers associate head-to-tail to form protofilaments running lengthwise along the microtubule wall with the beta-tubulin subunit facing the microtubule plus end conferring a structural polarity. Microtubules usually have 13 protofilaments but different protofilament numbers can be found in some organisms and specialized cells. It depends on Mg(2+) as a cofactor.

The protein localises to the cytoplasm. The protein resides in the cytoskeleton. It carries out the reaction GTP + H2O = GDP + phosphate + H(+). Tubulin is the major constituent of microtubules, a cylinder consisting of laterally associated linear protofilaments composed of alpha- and beta-tubulin heterodimers. Microtubules grow by the addition of GTP-tubulin dimers to the microtubule end, where a stabilizing cap forms. Below the cap, tubulin dimers are in GDP-bound state, owing to GTPase activity of alpha-tubulin. The chain is Tubulin alpha-8 chain (tba-8) from Caenorhabditis elegans.